We begin with the raw amino-acid sequence, 247 residues long: Small ribosomal subunit protein eS6 (247 aa).

The disordered stretch occupies residues A194–K247. Over residues R217 to K247 the composition is skewed to basic and acidic residues.

It belongs to the eukaryotic ribosomal protein eS6 family. In terms of processing, ribosomal protein S6 is the major substrate of protein kinases in eukaryote ribosomes.

Functionally, component of the 40S small ribosomal subunit. Plays an important role in controlling cell growth and proliferation through the selective translation of particular classes of mRNA. This is Small ribosomal subunit protein eS6 (RPS6) from Aplysia californica (California sea hare).